Here is a 505-residue protein sequence, read N- to C-terminus: Glutamate--tRNA ligase (505 aa).

Positions 12 to 22 (PSPTGDPHVGT) match the 'HIGH' region motif. The short motif at 253–257 (KLSKR) is the 'KMSKS' region element. Position 256 (K256) interacts with ATP.

This sequence belongs to the class-I aminoacyl-tRNA synthetase family. Glutamate--tRNA ligase type 1 subfamily. As to quaternary structure, monomer.

The protein localises to the cytoplasm. The catalysed reaction is tRNA(Glu) + L-glutamate + ATP = L-glutamyl-tRNA(Glu) + AMP + diphosphate. In terms of biological role, catalyzes the attachment of glutamate to tRNA(Glu) in a two-step reaction: glutamate is first activated by ATP to form Glu-AMP and then transferred to the acceptor end of tRNA(Glu). The sequence is that of Glutamate--tRNA ligase from Chlamydia felis (strain Fe/C-56) (Chlamydophila felis).